Here is a 297-residue protein sequence, read N- to C-terminus: Acetylglutamate kinase (297 aa).

Residues 72 to 73 (GG), Arg-94, and Asn-187 contribute to the substrate site.

The protein belongs to the acetylglutamate kinase family. ArgB subfamily.

The protein localises to the cytoplasm. The catalysed reaction is N-acetyl-L-glutamate + ATP = N-acetyl-L-glutamyl 5-phosphate + ADP. It functions in the pathway amino-acid biosynthesis; L-arginine biosynthesis; N(2)-acetyl-L-ornithine from L-glutamate: step 2/4. In terms of biological role, catalyzes the ATP-dependent phosphorylation of N-acetyl-L-glutamate. The protein is Acetylglutamate kinase of Synechocystis sp. (strain ATCC 27184 / PCC 6803 / Kazusa).